Reading from the N-terminus, the 539-residue chain is Chaperonin GroEL (539 aa).

ATP-binding positions include 30–33 (TLGP), 87–91 (DGTTT), Gly414, 479–481 (DAL), and Asp495.

This sequence belongs to the chaperonin (HSP60) family. Forms a cylinder of 14 subunits composed of two heptameric rings stacked back-to-back. Interacts with the co-chaperonin GroES.

The protein localises to the cytoplasm. It carries out the reaction ATP + H2O + a folded polypeptide = ADP + phosphate + an unfolded polypeptide.. Its function is as follows. Together with its co-chaperonin GroES, plays an essential role in assisting protein folding. The GroEL-GroES system forms a nano-cage that allows encapsulation of the non-native substrate proteins and provides a physical environment optimized to promote and accelerate protein folding. The sequence is that of Chaperonin GroEL from Caldicellulosiruptor bescii (strain ATCC BAA-1888 / DSM 6725 / KCTC 15123 / Z-1320) (Anaerocellum thermophilum).